We begin with the raw amino-acid sequence, 393 residues long: MWWGALSLLFWVPVQAAFLKMETVTVEEGQTLTLTCVTSQTKNVSLQWLAPSGFTIFLNQHPALKSSKYQLLHHSATQLSISVSNVTLREEGVYTCLHYGSSVKTKQVRVTVLVTPFQPTVEALVLRRQNGEKSVVLKCSTERSKPPPQITWLLGEGLEIYGELNHEFEADGKICNTSSMLIARAYGKNSTVHCIIQHEGLHGRKLVAPFQFEDLVADQETSDQETSDAPEQSSLSSQALQQPTSTVSMMENSSIPETDKEEKEHATQDPGLSTEASAQHTGLARRKSGILLLTLVSFLIFILFIIVQLFIMKLRKAHVVWKKESEISEQALESYRSRSNNEETSSQENSSQAPQSKRCMNYITRLYSGAKTKKSAQHWKLGGKHSRVPESIV.

A signal peptide spans 1–16 (MWWGALSLLFWVPVQA). Residues 17–111 (AFLKMETVTV…SVKTKQVRVT (95 aa)) enclose the Ig-like V-type domain. Over 17 to 289 (AFLKMETVTV…HTGLARRKSG (273 aa)) the chain is Extracellular. 2 disulfides stabilise this stretch: Cys36–Cys96 and Cys139–Cys194. Asn85 and Asn176 each carry an N-linked (GlcNAc...) asparagine glycan. The region spanning 119 to 208 (PTVEALVLRR…EGLHGRKLVA (90 aa)) is the Ig-like C2-type domain. Residues 218–228 (DQETSDQETSD) show a composition bias toward acidic residues. Residues 218 to 280 (DQETSDQETS…GLSTEASAQH (63 aa)) are disordered. The segment covering 229 to 246 (APEQSSLSSQALQQPTST) has biased composition (low complexity). Polar residues predominate over residues 247 to 256 (VSMMENSSIP). Over residues 257-267 (ETDKEEKEHAT) the composition is skewed to basic and acidic residues. A compositionally biased stretch (polar residues) spans 270 to 280 (PGLSTEASAQH). Residues 290 to 310 (ILLLTLVSFLIFILFIIVQLF) traverse the membrane as a helical segment. Over 311–393 (IMKLRKAHVV…KHSRVPESIV (83 aa)) the chain is Cytoplasmic. The segment at 333–356 (ESYRSRSNNEETSSQENSSQAPQS) is disordered. Positions 342-352 (EETSSQENSSQ) are enriched in low complexity. The PDZ-binding signature appears at 390 to 393 (ESIV).

The protein belongs to the nectin family. Monomer. May form homodimer (via Ig-like V-type domain). Interacts (via Ig-like V-type domain) with CADM1 (via Ig-like V-type domain); the interaction competes with CRTAM homodimerization and CADM1 homodimerization. Interacts (via PDZ-binding motif) with SCRIB (via PDZ domain 3); the interaction promotes CRTAM and SCRIB polarization in a subset of CD4+ T-cells. In terms of tissue distribution, in the immune system, expression is restricted to activated class-I MHC-restricted cells, including NKT, NK and CD8+ T-cells (at protein level). Transiently expressed in activated CD8+ T-cells and a subset of activated CD4+ T-cells (at protein level). Expressed in activated intestinal T-cells, specifically intraepithelial CD4+ CD8+ T-cells, intraepithelial CD4+ T-cells and, CD8+ T-cells in the intestine epithelium, lamina propria, Peyer's Patches and mesenteric lymph nodes. Also expressed in spleen, brain and testis.

It is found in the cell membrane. Its function is as follows. Mediates heterophilic cell-cell adhesion which regulates the activation, differentiation and tissue retention of various T-cell subsets. Interaction with CADM1 promotes natural killer (NK) cell cytotoxicity and IFNG/interferon-gamma secretion by CD8+ T-cells in vitro as well as NK cell-mediated rejection of tumors expressing CADM1 in vivo. Regulates CD8+ T-cell proliferation in response to T-cell receptor (TCR) activation. Appears to be dispensable for CD8+ T-cell-mediated cytotoxicity. Interaction with SCRIB promotes the late phase of cellular polarization of a subset of CD4+ T-cells, which in turn regulates TCR-mediated proliferation and IFNG, IL17 and IL22 production. By interacting with CADM1 on CD8+ dendritic cells, regulates the retention of activated CD8+ T-cells within the draining lymph node. Required for the intestinal retention of intraepithelial CD4+ CD8+ T-cells and, to a lesser extent, intraepithelial and lamina propria CD8+ T-cells and CD4+ T-cells. Interaction with CADM1 promotes the adhesion to gut-associated CD103+ dendritic cells, which may facilitate the expression of gut-homing and adhesion molecules on T-cells and the conversion of CD4+ T-cells into CD4+ CD8+ T-cells. This chain is Cytotoxic and regulatory T-cell molecule, found in Mus musculus (Mouse).